A 331-amino-acid chain; its full sequence is Glycerophosphodiester phosphodiesterase 1 (331 aa).

The Cytoplasmic segment spans residues 1–3 (MWL). A helical membrane pass occupies residues 4–24 (WEDQGGLLGPFSFVLVLLLVV). The Lumenal segment spans residues 25–248 (TRSPFNACVL…PRYSVFWKQS (224 aa)). The GP-PDE domain occupies 65 to 331 (VSAIAHRGGS…SMLEDCAPHF (267 aa)). Mg(2+) contacts are provided by glutamate 97 and aspartate 99. Asparagine 168 is a glycosylation site (N-linked (GlcNAc...) asparagine). Aspartate 174 is a binding site for Mg(2+). Residues 249 to 269 (VFVVLDILLDWSMHNVLWYLC) form a helical membrane-spanning segment. Over 270–331 (GISAFLMQKD…SMLEDCAPHF (62 aa)) the chain is Cytoplasmic.

The protein belongs to the glycerophosphoryl diester phosphodiesterase family. In terms of assembly, interacts with PRAF2. Interacts with RGS16. It depends on Mg(2+) as a cofactor. In terms of processing, N-glycosylated. In terms of tissue distribution, widely expressed. Highly expressed in the brain and spinal cord, followed by kidney, liver, and testis. In contrast, little or no expression is detected in the heart or spleen.

The protein localises to the cell membrane. Its subcellular location is the cytoplasmic vesicle membrane. It catalyses the reaction sn-glycero-3-phospho-1D-myo-inositol + H2O = myo-inositol + sn-glycerol 3-phosphate + H(+). The enzyme catalyses 1-O-(1Z-octadecenyl)-sn-glycero-3-phospho-(N-5Z,8Z,11Z,14Z-eicosatetraenoyl)-ethanolamine + H2O = 1-O-(1Z-octadecenyl)-sn-glycero-3-phosphate + N-(5Z,8Z,11Z,14Z-eicosatetraenoyl)-ethanolamine + H(+). It carries out the reaction 1-O-(1Z-octadecenyl)-sn-glycero-3-phospho-(N-9Z-octadecenoyl)-ethanolamine + H2O = 1-O-(1Z-octadecenyl)-sn-glycero-3-phosphate + N-(9Z-octadecenoyl) ethanolamine + H(+). The catalysed reaction is 1-O-(1Z-octadecenyl)-sn-glycero-3-phospho-N-hexadecanoyl-ethanolamine + H2O = 1-O-(1Z-octadecenyl)-sn-glycero-3-phosphate + N-hexadecanoylethanolamine + H(+). It catalyses the reaction N-(4Z,7Z,10Z,13Z,16Z,19Z)-docosahexaenoyl-sn-glycero-3-phosphoethanolamine + H2O = N-(4Z,7Z,10Z,13Z,16Z,19Z)-docosahexaenoyl ethanolamine + sn-glycerol 3-phosphate + H(+). The enzyme catalyses N-eicosanoyl-sn-glycero-3-phosphoethanolamine + H2O = N-eicosanoyl ethanolamine + sn-glycerol 3-phosphate + H(+). It carries out the reaction N-hexadecanoyl-sn-glycero-3-phosphoethanolamine + H2O = N-hexadecanoylethanolamine + sn-glycerol 3-phosphate + H(+). The catalysed reaction is N-(9Z-octadecenoyl)-sn-glycero-3-phosphoethanolamine + H2O = N-(9Z-octadecenoyl) ethanolamine + sn-glycerol 3-phosphate + H(+). It catalyses the reaction N-(5Z,8Z,11Z,14Z-eicosatetraenoyl)-sn-glycero-3-phosphoethanolamine + H2O = N-(5Z,8Z,11Z,14Z-eicosatetraenoyl)-ethanolamine + sn-glycerol 3-phosphate + H(+). With respect to regulation, inhibited by EDTA, calcium chloride, and zinc chloride. Enhanced by magnesium chloride. Glycerophosphodiester phosphodiesterase activity can be modulated by G-protein signaling pathways. Hydrolyzes the phosphodiester bond of glycerophosphodiesters such as glycerophosphoinositol (GroPIns) and glycerophosphoethanolamine (GroPEth), to yield a glycerol phosphate and an alcohol. Hydrolyzes glycerophospho-N-acylethanolamines to N-acylethanolamines in the brain and participates in bioactive N-acylethanolamine biosynthesis such as anandamide (an endocannabinoid), N-palmitoylethanolamine (an anti-inflammatory), and N-oleoylethanolamine (an anorexic). In addition, has a lysophospholipase D activity by hydrolyzing N-acyl-lysoplasmenylethanolamine (N-acyl-lysoPlsEt) to N-acylethanolamine. However lysophospholipase D activity is lower than glycerophosphodiester phosphodiesterase activity. Has little or no activity towards glycerophosphocholine. This chain is Glycerophosphodiester phosphodiesterase 1, found in Mus musculus (Mouse).